Reading from the N-terminus, the 190-residue chain is HTH-type transcriptional repressor CutR (190 aa).

The 56-residue stretch at 3–58 folds into the HTH deoR-type domain; that stretch reads PINRQQHILKWLKEEGSLRISDISARFGVSEMTVYRDVNQLVQSNQVIKTAGGITL. Positions 20–39 form a DNA-binding region, H-T-H motif; the sequence is LRISDISARFGVSEMTVYRD.

The protein resides in the cytoplasm. In terms of biological role, may act as a negative transcriptional regulator of cutJ/ycnJ in the presence of copper. May use copper as a corepressor. The protein is HTH-type transcriptional repressor CutR of Bacillus subtilis (strain 168).